The chain runs to 217 residues: Adenylate kinase (217 aa).

Position 10-15 (Gly10–Thr15) interacts with ATP. Positions Ser30–Val59 are NMP. AMP-binding positions include Thr31, Arg36, Leu57–Val59, Gly85–Arg88, and Gln92. Residues Gly126–Asp163 are LID. Arg127 provides a ligand contact to ATP. Zn(2+) is bound by residues Cys130 and Cys133. Thr136–Tyr137 lines the ATP pocket. Residues Cys150 and Cys153 each coordinate Zn(2+). Residues Arg160 and Arg171 each coordinate AMP. Lys199 contributes to the ATP binding site.

It belongs to the adenylate kinase family. As to quaternary structure, monomer.

It localises to the cytoplasm. The catalysed reaction is AMP + ATP = 2 ADP. The protein operates within purine metabolism; AMP biosynthesis via salvage pathway; AMP from ADP: step 1/1. Functionally, catalyzes the reversible transfer of the terminal phosphate group between ATP and AMP. Plays an important role in cellular energy homeostasis and in adenine nucleotide metabolism. This is Adenylate kinase from Thermoanaerobacter pseudethanolicus (strain ATCC 33223 / 39E) (Clostridium thermohydrosulfuricum).